Consider the following 129-residue polypeptide: Small ribosomal subunit protein uS11 (129 aa).

Belongs to the universal ribosomal protein uS11 family. As to quaternary structure, part of the 30S ribosomal subunit. Interacts with proteins S7 and S18. Binds to IF-3.

Functionally, located on the platform of the 30S subunit, it bridges several disparate RNA helices of the 16S rRNA. Forms part of the Shine-Dalgarno cleft in the 70S ribosome. This chain is Small ribosomal subunit protein uS11, found in Bartonella quintana (strain Toulouse) (Rochalimaea quintana).